Reading from the N-terminus, the 557-residue chain is Leucine-rich glioma-inactivated protein 1 (557 aa).

A signal peptide spans 1-34 (MESERSKRMGNACIPLKRIAYFLCLLSALLLTEG). One can recognise an LRRNT domain in the interval 35–72 (KKPAKPKCPAVCTCTKDNALCENARSIPRTVPPDVISL). 3 LRR repeats span residues 92 to 113 (SLQLLLFTSNSFDVISDDAFIG), 116 to 137 (HLEYLFIENNNIKSISRHTFRG), and 140 to 161 (SLIHLSLANNNLQTLPKDIFKG). In terms of domain architecture, LRRCT spans 173 to 223 (NSFNCDCKLKWLVEWLGHTNATVEDIYCEGPPEYKKRKINSLSSKDFDCII). Asn-192 carries an N-linked (GlcNAc...) asparagine glycan. EAR repeat units lie at residues 225–267 (EFAK…EWDH), 271–313 (TFRN…KRDS), 317–364 (KFIK…KWNG), 366–415 (GFYS…QWNK), 419–462 (LFTN…KWGG), 464–506 (SFQD…NWDA), and 510–552 (KFVK…KHVI). An N-linked (GlcNAc...) asparagine glycan is attached at Asn-277. Asn-422 carries an N-linked (GlcNAc...) asparagine glycan.

As to quaternary structure, oligomer. Interacts with KCNA1 within a complex containing KCNA1, KCNA4 and KCNAB1. Part of a complex containing ADAM22, DLG4/PSD95 and CACNG2 (stargazin). Can bind to ADAM11 and ADAM23. Glycosylated.

It is found in the secreted. The protein resides in the synapse. It localises to the cytoplasm. Regulates voltage-gated potassium channels assembled from KCNA1, KCNA4 and KCNAB1. It slows down channel inactivation by precluding channel closure mediated by the KCNAB1 subunit. Ligand for ADAM22 that positively regulates synaptic transmission mediated by AMPA-type glutamate receptors. Plays a role in suppressing the production of MMP1/3 through the phosphatidylinositol 3-kinase/ERK pathway. This is Leucine-rich glioma-inactivated protein 1 (LGI1) from Pongo abelii (Sumatran orangutan).